The chain runs to 360 residues: GTPase Obg (360 aa).

Residues 1 to 156 (MFVDSVEIII…KCVRLELKLI (156 aa)) form the Obg domain. The OBG-type G domain occupies 157-360 (ADIGLVGFPN…LKFVLLEALP (204 aa)). Residues 163 to 170 (GFPNAGKS), 188 to 192 (FTTLV), 210 to 213 (DIPG), 279 to 282 (NKCD), and 341 to 343 (SAL) contribute to the GTP site. Serine 170 and threonine 190 together coordinate Mg(2+).

The protein belongs to the TRAFAC class OBG-HflX-like GTPase superfamily. OBG GTPase family. In terms of assembly, monomer. Requires Mg(2+) as cofactor.

The protein resides in the cytoplasm. In terms of biological role, an essential GTPase which binds GTP, GDP and possibly (p)ppGpp with moderate affinity, with high nucleotide exchange rates and a fairly low GTP hydrolysis rate. Plays a role in control of the cell cycle, stress response, ribosome biogenesis and in those bacteria that undergo differentiation, in morphogenesis control. The chain is GTPase Obg from Helicobacter pylori (strain Shi470).